A 277-amino-acid chain; its full sequence is Diaminopimelate epimerase (277 aa).

Substrate is bound by residues Asn-17, Gln-50, and Asn-68. Cys-77 acts as the Proton donor in catalysis. Substrate contacts are provided by residues 78–79 (GN), Asn-162, Asn-195, and 213–214 (ER). The active-site Proton acceptor is the Cys-222. 223-224 (GT) is a substrate binding site.

This sequence belongs to the diaminopimelate epimerase family. Homodimer.

It is found in the cytoplasm. The enzyme catalyses (2S,6S)-2,6-diaminopimelate = meso-2,6-diaminopimelate. The protein operates within amino-acid biosynthesis; L-lysine biosynthesis via DAP pathway; DL-2,6-diaminopimelate from LL-2,6-diaminopimelate: step 1/1. In terms of biological role, catalyzes the stereoinversion of LL-2,6-diaminopimelate (L,L-DAP) to meso-diaminopimelate (meso-DAP), a precursor of L-lysine and an essential component of the bacterial peptidoglycan. This chain is Diaminopimelate epimerase, found in Phenylobacterium zucineum (strain HLK1).